The following is a 430-amino-acid chain: Mannosylglucosylglycerate synthase (430 aa).

The protein belongs to the glycosyltransferase group 1 family. A divalent metal cation is required as a cofactor.

It carries out the reaction (2R)-2-O-(alpha-D-glucopyranosyl)-glycerate + GDP-alpha-D-mannose = (2R)-2-O-[alpha-D-mannopyranosyl-(1-&gt;2)-alpha-D-glucopyranosyl]-glycerate + GDP + H(+). Its function is as follows. Involved in the biosynthesis of the compatible solute mannosylglucosylglycerate through a nonphosphorylating pathway. Catalyzes the synthesis of mannosylglucosylglycerate (MGG) from glucosylglycerate (GG) and GDP-mannose. In Petrotoga mobilis (strain DSM 10674 / SJ95), this protein is Mannosylglucosylglycerate synthase.